Here is a 152-residue protein sequence, read N- to C-terminus: Phosphopantetheine adenylyltransferase (152 aa).

S9 serves as a coordination point for substrate. ATP-binding positions include 9–10 (SF) and H17. Substrate-binding residues include K41, T73, and R87. ATP is bound by residues 88-90 (GLR), E98, and 122-128 (TSFISSS).

It belongs to the bacterial CoaD family. In terms of assembly, homohexamer. The cofactor is Mg(2+).

The protein resides in the cytoplasm. The catalysed reaction is (R)-4'-phosphopantetheine + ATP + H(+) = 3'-dephospho-CoA + diphosphate. It participates in cofactor biosynthesis; coenzyme A biosynthesis; CoA from (R)-pantothenate: step 4/5. In terms of biological role, reversibly transfers an adenylyl group from ATP to 4'-phosphopantetheine, yielding dephospho-CoA (dPCoA) and pyrophosphate. This chain is Phosphopantetheine adenylyltransferase, found in Flavobacterium johnsoniae (strain ATCC 17061 / DSM 2064 / JCM 8514 / BCRC 14874 / CCUG 350202 / NBRC 14942 / NCIMB 11054 / UW101) (Cytophaga johnsonae).